The chain runs to 87 residues: Defensin alpha-like protein 1 (87 aa).

The first 19 residues, Met1 to Ala19, serve as a signal peptide directing secretion. The propeptide occupies Asp20 to Asp56. The segment covering Gln23–Asp41 has biased composition (acidic residues). Residues Gln23 to Ser43 are disordered.

It belongs to the alpha-defensin family. In terms of assembly, antiparallel homodimer; disulfide-linked. In terms of tissue distribution, specifically expressed in small intestine (jejunum and ileum). Probably expressed by Paneth cells at the base of intestinal crypts. Coexpressed with MMP7 in small intestine.

It localises to the secreted. Intestinal defense peptide. Has potent antibacterial activity against Gram-negative bacteria E.coli O157:H7, S.typhimurium DT104, and K.pneumoniae; and against Gram-positive bacteria S.aureus, methicillin-resistant S.aureus and L.monocytogenes. Remains active in the presence of NaCl and Mg(2+). Probably functions by disrupting bacterial membrane integrity. However, does not show cytotoxic activity towards human intestinal cells. This chain is Defensin alpha-like protein 1, found in Rattus norvegicus (Rat).